The primary structure comprises 358 residues: Protein-glutamate methylesterase/protein-glutamine glutaminase 1 (358 aa).

Residues 8-125 form the Response regulatory domain; that stretch reads RVLIVDDSAV…ARGLEGYAEE (118 aa). Asp59 is modified (4-aspartylphosphate). A CheB-type methylesterase domain is found at 165 to 352; it reads FRTTDRLIAI…LDRVAERLLA (188 aa). Active-site residues include Ser177, His203, and Asp299.

This sequence belongs to the CheB family. Post-translationally, phosphorylated by CheA. Phosphorylation of the N-terminal regulatory domain activates the methylesterase activity.

The protein localises to the cytoplasm. It catalyses the reaction [protein]-L-glutamate 5-O-methyl ester + H2O = L-glutamyl-[protein] + methanol + H(+). The enzyme catalyses L-glutaminyl-[protein] + H2O = L-glutamyl-[protein] + NH4(+). Involved in chemotaxis. Part of a chemotaxis signal transduction system that modulates chemotaxis in response to various stimuli. Catalyzes the demethylation of specific methylglutamate residues introduced into the chemoreceptors (methyl-accepting chemotaxis proteins or MCP) by CheR. Also mediates the irreversible deamidation of specific glutamine residues to glutamic acid. This is Protein-glutamate methylesterase/protein-glutamine glutaminase 1 from Xanthomonas axonopodis pv. citri (strain 306).